The sequence spans 256 residues: uncharacterized protein (256 aa).

The 55-residue stretch at 10 to 64 folds into the HTH cro/C1-type domain; that stretch reads IRALRESRDWSLADLAAATGVSTMGLSYLERGARKPHKSTVQKVENGLGLPPGTY. The segment at residues 21-40 is a DNA-binding region (H-T-H motif); the sequence is LADLAAATGVSTMGLSYLER.

This is an uncharacterized protein from Mycobacterium bovis (strain ATCC BAA-935 / AF2122/97).